The following is a 593-amino-acid chain: Eukaryotic peptide chain release factor subunit 1 (593 aa).

This sequence belongs to the eukaryotic release factor 1 family. In terms of assembly, heterodimer of two subunits, one of which binds GTP.

The protein resides in the cytoplasm. Directs the termination of nascent peptide synthesis (translation) in response to the termination codons UAA, UAG and UGA. The protein is Eukaryotic peptide chain release factor subunit 1 of Caenorhabditis elegans.